A 168-amino-acid chain; its full sequence is S-ribosylhomocysteine lyase (168 aa).

Fe cation is bound by residues His-54, His-58, and Cys-128.

Belongs to the LuxS family. In terms of assembly, homodimer. Fe cation is required as a cofactor.

It carries out the reaction S-(5-deoxy-D-ribos-5-yl)-L-homocysteine = (S)-4,5-dihydroxypentane-2,3-dione + L-homocysteine. In terms of biological role, involved in the synthesis of autoinducer 2 (AI-2) which is secreted by bacteria and is used to communicate both the cell density and the metabolic potential of the environment. The regulation of gene expression in response to changes in cell density is called quorum sensing. Catalyzes the transformation of S-ribosylhomocysteine (RHC) to homocysteine (HC) and 4,5-dihydroxy-2,3-pentadione (DPD). The chain is S-ribosylhomocysteine lyase from Actinobacillus succinogenes (strain ATCC 55618 / DSM 22257 / CCUG 43843 / 130Z).